Consider the following 259-residue polypeptide: Ribosomal RNA small subunit methyltransferase A (259 aa).

Residues N13, L15, G40, E61, D85, and N103 each contribute to the S-adenosyl-L-methionine site.

The protein belongs to the class I-like SAM-binding methyltransferase superfamily. rRNA adenine N(6)-methyltransferase family. RsmA subfamily.

The protein resides in the cytoplasm. It carries out the reaction adenosine(1518)/adenosine(1519) in 16S rRNA + 4 S-adenosyl-L-methionine = N(6)-dimethyladenosine(1518)/N(6)-dimethyladenosine(1519) in 16S rRNA + 4 S-adenosyl-L-homocysteine + 4 H(+). In terms of biological role, specifically dimethylates two adjacent adenosines (A1518 and A1519) in the loop of a conserved hairpin near the 3'-end of 16S rRNA in the 30S particle. May play a critical role in biogenesis of 30S subunits. This is Ribosomal RNA small subunit methyltransferase A from Neisseria meningitidis serogroup A / serotype 4A (strain DSM 15465 / Z2491).